The chain runs to 32 residues: DNA-binding protein HU (32 aa).

Belongs to the bacterial histone-like protein family.

In terms of biological role, histone-like DNA-binding protein which is capable of wrapping DNA to stabilize it, and thus to prevent its denaturation under extreme environmental conditions. The chain is DNA-binding protein HU (hup) from Synechocystis sp. (strain PCC 6701).